The sequence spans 607 residues: Pogo transposable element with KRAB domain (607 aa).

A coiled-coil region spans residues Leu-8 to Gly-29. Residue Lys-13 forms a Glycyl lysine isopeptide (Lys-Gly) (interchain with G-Cter in SUMO2) linkage. The region spanning Ala-47 to Phe-118 is the KRAB domain. In terms of domain architecture, HTH CENPB-type spans Ala-250 to His-323. The region spanning Tyr-355–Phe-567 is the DDE-1 domain. Residue Lys-384 forms a Glycyl lysine isopeptide (Lys-Gly) (interchain with G-Cter in SUMO2) linkage. The interval Gly-588–Asp-607 is disordered. Over residues Glu-589–Gly-599 the composition is skewed to basic and acidic residues.

The protein localises to the nucleus. The polypeptide is Pogo transposable element with KRAB domain (Pogk) (Mus musculus (Mouse)).